Reading from the N-terminus, the 312-residue chain is Pectinesterase inhibitor 10 (312 aa).

The signal sequence occupies residues 1–25 (MNILSQTQILHLSIAILLFITTSSS). 2 stretches are compositionally biased toward low complexity: residues 24 to 36 (SSSLSPSSSSPSL) and 44 to 55 (SPSSAPPSSLSP). The interval 24 to 141 (SSSLSPSSSS…PSSSSSTYSN (118 aa)) is disordered. The segment covering 56–75 (SSPPPLSLSPSSPPPPPPSS) has biased composition (pro residues). Low complexity-rich tracts occupy residues 76–85 (SPLSSLSPSL) and 93–104 (SPSSAPPSSLSP). Positions 105-124 (SSPPPLSLSPSSPPPPPPSS) are enriched in pro residues. Residues 125–137 (SPLSSLSPSSSSS) are compositionally biased toward low complexity. N-linked (GlcNAc...) asparagine glycans are attached at residues N141, N153, N185, and N200. C152 and C161 form a disulfide bridge. C218 and C268 are disulfide-bonded.

The protein belongs to the PMEI family.

It is found in the secreted. The protein localises to the extracellular space. Its subcellular location is the apoplast. Functionally, pectin methylesterase (PME) inhibitor involved in the maintenance of cell wall integrity in response to necrotrophic pathogens. Modulates PME activity and pectin methylesterification during infection by Botrytis cinerea and contributes to resistance against the pathogen. The polypeptide is Pectinesterase inhibitor 10 (Arabidopsis thaliana (Mouse-ear cress)).